A 232-amino-acid polypeptide reads, in one-letter code: Homeobox protein SAX-1 (232 aa).

Disordered regions lie at residues 1–64 (CLPD…SCAK), 122–150 (KQHP…RPAA), and 185–208 (LLGA…LCPS). Residues 65–124 (PRRARTAFTYEQLVALENKFRATRYLSVCERLNLALSLSLTETQVKIWFQNRRTKWKKQH) constitute a DNA-binding region (homeobox). Residues 126–142 (GADGAAAPAPPAAARCS) are compositionally biased toward low complexity.

This sequence belongs to the NK-1 homeobox family. Transiently expressed in the birth zone of the whole spinal cord regardless of the axial level.

It is found in the nucleus. This is Homeobox protein SAX-1 (SAX1) from Gallus gallus (Chicken).